Reading from the N-terminus, the 671-residue chain is MCGISAFITHPGHSRSPVLNGDAKQVVEELETSLDLIAHRGPDARGRWFSDNHHVGLGHVRLSIIDLSPSGNQPFHDEQGGIHAVVNGELYDYERYKAQLADEFKFVGNSDCEIVIALYKHYGLSFISHLRGEFAFVLWDENRQQLIAARDRYGIKSLYYTVHQNKLLVATEIKSFLAFGLEPEWCVRSLRDQSWRVDSTTFFEGVYKVRPGHYLICRPNEREEQHPYWDLEYPDKFAKDLRSEDEITEGVRERLLEAVRIRLKADVPVAVYLSGGIDSSSVAGMVSHLIKQGTKLGNETSLLPSSMKCYTVQFDEGSGADESAIARRTADFLGVDIHLVKMDEEALVSRFEDTTWYSEVPLPDLNGMGRLALAEAVHAQGIKAVITGEGSDEHFGGYDAFRADSLSEPDHSWPAMMTDTERQEAHALASKEAQYGIFGDFTPKVPISTKRMFYSNHVASSIARVGSLPFSDWTKVYGNSIPETTMIEGFDGRVRDNILKRWHPVHTAQYMFVKTFMPHFILRYNGDNIDMVHQVESRCPFLDHHLTEYVNNVPPSLKMRYNAKDKSWREKHILREAVKPFVTDEVYNMSKKAYMGPRKFWPGGPLHKKISELVTKANVENLGFVDWQATQDAMDGAFNKQEGLALRRIITVAQFVVLGQRFGVKRASGRR.

Residue Cys2 is the Nucleophile of the active site. Residues 2 to 220 enclose the Glutamine amidotransferase type-2 domain; the sequence is CGISAFITHP…PGHYLICRPN (219 aa). In terms of domain architecture, Asparagine synthetase spans 251-639; the sequence is VRERLLEAVR…TQDAMDGAFN (389 aa).

Belongs to the asparagine synthetase family.

It participates in pigment biosynthesis. Amidase; part of the gene cluster that mediates the biosynthesis of the yellow pigment chrysogine. Pyruvic acid and anthranilic acid are likely substrates for the nonribosomal peptide synthetase chry1/NRPS14, with pyruvic acid adenylated by the first A domain and anthranilic acid by the second. If pyruvic acid and anthranilic acid are merged and released from chry1/NRPS14 by hydrolysis, a subsequent amidation would lead to 2-pyruvoylaminobenzamide. This process is probably catalyzed by the amidotransferase chry2 using glutamine as amino donor. The dehydrogenase chry5 that has a terminal berberine bridge domain for C-N cyclization could catalyze the cyclization of 2-pyruvoylaminobenzamide to yield acetyl-4(3H)-quinazolidinone. A final reduction of acetyl-4(3H)-quinazolidinone catalyzed by the oxidoreductase chry4 would result in chrysogine. In Gibberella zeae (strain ATCC MYA-4620 / CBS 123657 / FGSC 9075 / NRRL 31084 / PH-1) (Wheat head blight fungus), this protein is Amidase chry2.